The following is a 256-amino-acid chain: Leucyl/phenylalanyl-tRNA--protein transferase (256 aa).

The tract at residues 1–21 (MIPWLPDDSDSAPFPPTRLAL) is disordered.

It belongs to the L/F-transferase family.

The protein resides in the cytoplasm. The enzyme catalyses N-terminal L-lysyl-[protein] + L-leucyl-tRNA(Leu) = N-terminal L-leucyl-L-lysyl-[protein] + tRNA(Leu) + H(+). It catalyses the reaction N-terminal L-arginyl-[protein] + L-leucyl-tRNA(Leu) = N-terminal L-leucyl-L-arginyl-[protein] + tRNA(Leu) + H(+). It carries out the reaction L-phenylalanyl-tRNA(Phe) + an N-terminal L-alpha-aminoacyl-[protein] = an N-terminal L-phenylalanyl-L-alpha-aminoacyl-[protein] + tRNA(Phe). In terms of biological role, functions in the N-end rule pathway of protein degradation where it conjugates Leu, Phe and, less efficiently, Met from aminoacyl-tRNAs to the N-termini of proteins containing an N-terminal arginine or lysine. This chain is Leucyl/phenylalanyl-tRNA--protein transferase, found in Leptothrix cholodnii (strain ATCC 51168 / LMG 8142 / SP-6) (Leptothrix discophora (strain SP-6)).